Here is a 548-residue protein sequence, read N- to C-terminus: Membrane protein insertase YidC (548 aa).

Residues 6 to 26 (NLLVIALLFVSFMIWQAWEQD) form a helical membrane-spanning segment. The disordered stretch occupies residues 28 to 56 (NPQPQTQQTTQTTTTAAGSAADQGVPASG). The segment covering 29–42 (PQPQTQQTTQTTTT) has biased composition (low complexity). 4 consecutive transmembrane segments (helical) span residues 350–370 (FVGNWGFSIIIITFIVRGIMY), 424–444 (FPLIIQMPIFLALYYMLMGSI), 458–478 (LSAQDPYYILPILMGVTMFFI), and 499–519 (PVIFTVFFLWFPSGLVLYYIV).

Belongs to the OXA1/ALB3/YidC family. Type 1 subfamily. Interacts with the Sec translocase complex via SecD. Specifically interacts with transmembrane segments of nascent integral membrane proteins during membrane integration.

The protein localises to the cell inner membrane. In terms of biological role, required for the insertion and/or proper folding and/or complex formation of integral membrane proteins into the membrane. Involved in integration of membrane proteins that insert both dependently and independently of the Sec translocase complex, as well as at least some lipoproteins. Aids folding of multispanning membrane proteins. This Salmonella paratyphi C (strain RKS4594) protein is Membrane protein insertase YidC.